The primary structure comprises 168 residues: Cyanate hydratase (168 aa).

Residues Arg94, Glu97, and Ser120 contribute to the active site.

Belongs to the cyanase family.

The catalysed reaction is cyanate + hydrogencarbonate + 3 H(+) = NH4(+) + 2 CO2. Its function is as follows. Catalyzes the reaction of cyanate with bicarbonate to produce ammonia and carbon dioxide. This is Cyanate hydratase from Oryza sativa subsp. indica (Rice).